Reading from the N-terminus, the 148-residue chain is uncharacterized protein (148 aa).

A signal peptide spans 1 to 16 (MDVLFIALLVAPLILG). An N-linked (GlcNAc...) asparagine glycan is attached at N50. Residues 91-125 (MDPQNPVTTKPVTTEPVTTEPVTTEPQSPNQNDAM) form a disordered region. The span at 96-116 (PVTTKPVTTEPVTTEPVTTEP) shows a compositional bias: low complexity.

Its subcellular location is the secreted. This is an uncharacterized protein from Mus musculus (Mouse).